Here is a 291-residue protein sequence, read N- to C-terminus: Pyridoxal 5'-phosphate synthase subunit PdxS (291 aa).

Asp23 contacts D-ribose 5-phosphate. The active-site Schiff-base intermediate with D-ribose 5-phosphate is Lys80. Gly152 is a D-ribose 5-phosphate binding site. Residue Arg164 participates in D-glyceraldehyde 3-phosphate binding. D-ribose 5-phosphate contacts are provided by residues Gly213 and 234–235 (GS).

This sequence belongs to the PdxS/SNZ family. In the presence of PdxT, forms a dodecamer of heterodimers.

The catalysed reaction is aldehydo-D-ribose 5-phosphate + D-glyceraldehyde 3-phosphate + L-glutamine = pyridoxal 5'-phosphate + L-glutamate + phosphate + 3 H2O + H(+). It functions in the pathway cofactor biosynthesis; pyridoxal 5'-phosphate biosynthesis. Catalyzes the formation of pyridoxal 5'-phosphate from ribose 5-phosphate (RBP), glyceraldehyde 3-phosphate (G3P) and ammonia. The ammonia is provided by the PdxT subunit. Can also use ribulose 5-phosphate and dihydroxyacetone phosphate as substrates, resulting from enzyme-catalyzed isomerization of RBP and G3P, respectively. The protein is Pyridoxal 5'-phosphate synthase subunit PdxS of Haemophilus influenzae (strain PittGG).